Reading from the N-terminus, the 517-residue chain is Amidophosphoribosyltransferase (517 aa).

Met-1 is modified (N-acetylmethionine). Positions 1–11 (MELEELGIREE) are excised as a propeptide. Cys-12 serves as the catalytic Nucleophile. The region spanning 12 to 261 (CGVFGCIASG…PGEIVEISRH (250 aa)) is the Glutamine amidotransferase type-2 domain. Cys-280 is a [4Fe-4S] cluster binding site. 3 residues coordinate Mg(2+): Ser-327, Asp-389, and Asp-390. [4Fe-4S] cluster-binding residues include Cys-426, Cys-503, and Cys-506.

In the C-terminal section; belongs to the purine/pyrimidine phosphoribosyltransferase family. As to quaternary structure, homotetramer. Mg(2+) is required as a cofactor. Requires [4Fe-4S] cluster as cofactor.

The enzyme catalyses 5-phospho-beta-D-ribosylamine + L-glutamate + diphosphate = 5-phospho-alpha-D-ribose 1-diphosphate + L-glutamine + H2O. It participates in purine metabolism; IMP biosynthesis via de novo pathway; N(1)-(5-phospho-D-ribosyl)glycinamide from 5-phospho-alpha-D-ribose 1-diphosphate: step 1/2. Its function is as follows. Catalyzes the formation of phosphoribosylamine from phosphoribosylpyrophosphate (PRPP) and glutamine. The protein is Amidophosphoribosyltransferase of Mus musculus (Mouse).